A 21-amino-acid polypeptide reads, in one-letter code: Dahlein-5.2 (21 aa).

As to expression, expressed by the skin dorsal glands.

It is found in the secreted. Functionally, has no antimicrobial activity. Strongly inhibits the formation of NO by neuronal nitric oxide synthase at micromolar concentrations. This Ranoidea dahlii (Dahl's aquatic frog) protein is Dahlein-5.2.